The chain runs to 123 residues: Guanine nucleotide exchange factor MSS4 (123 aa).

Met-1 is modified (N-acetylmethionine). Residues 9 to 123 enclose the MSS4 domain; it reads ELVSAEGRNR…YVALERVSHE (115 aa). 4 residues coordinate Zn(2+): Cys-23, Cys-26, Cys-94, and Cys-97.

It belongs to the DSS4/MSS4 family. In terms of assembly, interacts with RAB8A. In terms of tissue distribution, ubiquitous.

Its function is as follows. Guanine-nucleotide-releasing protein that acts on members of the SEC4/YPT1/RAB subfamily. Stimulates GDP release from both YPT1, RAB3A and RAB10, but is less active on these proteins than on the SEC4 protein. Might play a general role in vesicular transport. This is Guanine nucleotide exchange factor MSS4 (Rabif) from Rattus norvegicus (Rat).